The following is a 2430-amino-acid chain: Transcription factor HIVEP2 (2430 aa).

Positions 1–127 are disordered; the sequence is MDTGDTALGQ…SLEGPPWLFP (127 aa). Composition is skewed to polar residues over residues 11–22 and 96–110; these read KATSRSGETDSV and HSLS…QGMT. 2 C2H2-type zinc fingers span residues 189–211 and 217–239; these read YICP…IRSH and YPCI…RKSH. 3 disordered regions span residues 271–302, 374–418, and 744–995; these read IHSD…PPVP, SEKK…NTNA, and AHGH…SGKH. Over residues 381-418 the composition is skewed to polar residues; it reads SEPSLNLLSPHSKGSTDSGYFSRSESAEQQISPPNTNA. Composition is skewed to basic and acidic residues over residues 744-753 and 775-784; these read AHGHSDRLDP and DPDKMTDLGK. Over residues 792-804 the composition is skewed to polar residues; it reads SVIQHTNSLSRPN. Ser-811 is modified (phosphoserine). The segment covering 853-863 has biased composition (polar residues); it reads SKPTPSQQVPQ. Basic and acidic residues predominate over residues 884-908; it reads RVTEEPDKPEKEKEAPTKEPEKPVE. A Nuclear localization signal motif is present at residues 929-935; the sequence is PKKKRLR. Residues Ser-942, Ser-947, Ser-1040, Ser-1431, and Ser-1435 each carry the phosphoserine modification. Low complexity predominate over residues 944–974; it reads GESSFESTGTGLSRSPSQESNLSHSSSFSMS. The interval 1472–1584 is disordered; that stretch reads KKGLSRPQKP…GGQQEEEGKA (113 aa). Composition is skewed to low complexity over residues 1499–1520 and 1560–1569; these read SRSS…SASG and SDMSMSPQSS. 2 C2H2-type zinc fingers span residues 1783–1805 and 1811–1835; these read YICE…IRTH and YVCK…SKAH. 2 disordered regions span residues 1848 to 1931 and 1986 to 2117; these read SVDD…SSLP and FQSK…SPRR. Over residues 1850–1860 the composition is skewed to acidic residues; that stretch reads DDTETEEAENM. A compositionally biased stretch (basic and acidic residues) spans 1861–1871; sequence EELHKTSEKHS. Acidic residues predominate over residues 1883 to 1909; it reads DAEESDGEDGDDNDDDDEDDDDFDDQG. Residues 1991-2001 are compositionally biased toward basic and acidic residues; it reads TDSEPDKDRLD. Residues 2013–2037 are compositionally biased toward low complexity; the sequence is SSEPSSSPRDFSPSSYRSSPGYDSS. Tandem repeats lie at residues 2037-2040, 2043-2046, 2055-2058, 2067-2070, 2073-2076, 2090-2093, 2096-2099, 2102-2105, 2114-2117, and 2129-2132. The interval 2037-2132 is 10 X 4 AA tandem repeats of S-P-[RGMKC]-[RK]; the sequence is SPCRDNSPKR…TTIRAPSPRR (96 aa). Residues 2062–2085 are compositionally biased toward basic and acidic residues; that stretch reads PRRDLSPMRHLSPRKEAALRREMS. Ser-2102 is modified (phosphoserine). The segment covering 2107–2116 has biased composition (basic and acidic residues); sequence ITARRDLSPR. 3 disordered regions span residues 2226–2252, 2268–2309, and 2352–2430; these read PALS…GAPG, KQAP…QEEN, and SIRH…NQLH. Low complexity predominate over residues 2271 to 2289; sequence PQVLQSSGLPSSPSSPRLL. Phosphoserine is present on residues Ser-2281 and Ser-2285. A compositionally biased stretch (polar residues) spans 2291 to 2301; that stretch reads KQSTSEDSLNS. The span at 2371 to 2380 shows a compositional bias: basic and acidic residues; sequence PDLHDGEKDT. Residues 2406–2417 are compositionally biased toward polar residues; sequence FQSSKELSLSTE. Ser-2413 and Ser-2415 each carry phosphoserine.

Interacts with TCF4. Expressed in heart, lung, skeletal muscle and liver. In the brain expressed in cerebral cortex, hippocampus, corpora amygdala and cerebellar cortex.

Its subcellular location is the nucleus. In terms of biological role, specifically binds to the DNA sequence 5'-GGGACTTTCC-3' which is found in the enhancer elements of numerous viral promoters such as those of SV40, CMV, or HIV1. In addition, related sequences are found in the enhancer elements of a number of cellular promoters, including those of the class I MHC, interleukin-2 receptor, somatostatin receptor II, and interferon-beta genes. It may act in T-cell activation. This is Transcription factor HIVEP2 (Hivep2) from Mus musculus (Mouse).